The following is a 1296-amino-acid chain: DNA-directed RNA polymerase subunit beta' (1296 aa).

Cys60, Cys62, Cys75, and Cys78 together coordinate Zn(2+). The span at 185-202 (EEEGGKAAEKRKLRDSAD) shows a compositional bias: basic and acidic residues. The segment at 185–204 (EEEGGKAAEKRKLRDSADRQ) is disordered. Asp535, Asp537, and Asp539 together coordinate Mg(2+). Zn(2+) is bound by residues Cys877, Cys954, Cys961, and Cys964.

The protein belongs to the RNA polymerase beta' chain family. As to quaternary structure, the RNAP catalytic core consists of 2 alpha, 1 beta, 1 beta' and 1 omega subunit. When a sigma factor is associated with the core the holoenzyme is formed, which can initiate transcription. The cofactor is Mg(2+). It depends on Zn(2+) as a cofactor.

The enzyme catalyses RNA(n) + a ribonucleoside 5'-triphosphate = RNA(n+1) + diphosphate. Its function is as follows. DNA-dependent RNA polymerase catalyzes the transcription of DNA into RNA using the four ribonucleoside triphosphates as substrates. The protein is DNA-directed RNA polymerase subunit beta' of Kocuria rhizophila (strain ATCC 9341 / DSM 348 / NBRC 103217 / DC2201).